A 330-amino-acid chain; its full sequence is Serine/threonine-protein phosphatase beta isoform (330 aa).

Positions 63, 65, 91, and 123 each coordinate Mn(2+). His124 (proton donor) is an active-site residue. The Mn(2+) site is built by His172 and His247. Positions 308–319 are enriched in polar residues; the sequence is GMNSSRPTTPQR. The segment at 308–330 is disordered; that stretch reads GMNSSRPTTPQRSAPMLATNKKK. A phosphothreonine mark is found at Thr315 and Thr316.

The protein belongs to the PPP phosphatase family. PP-1 subfamily. Interacts with Nop17l. Interacts with uri; uri inhibits flw phosphatase activity. Requires Mn(2+) as cofactor.

The enzyme catalyses O-phospho-L-seryl-[protein] + H2O = L-seryl-[protein] + phosphate. It carries out the reaction O-phospho-L-threonyl-[protein] + H2O = L-threonyl-[protein] + phosphate. Functionally, required for cell adhesion in non-muscle tissues and in maintenance of muscle attachment. Vital for larval development. The polypeptide is Serine/threonine-protein phosphatase beta isoform (flw) (Drosophila melanogaster (Fruit fly)).